The sequence spans 647 residues: Exoribonuclease 2 (647 aa).

Residues 192–520 enclose the RNB domain; the sequence is REDLTALSFV…NHRLLKAIIS (329 aa). In terms of domain architecture, S1 motif spans 565–647; the sequence is ESTFNAEIID…ETRNIVARPI (83 aa).

The protein belongs to the RNR ribonuclease family. RNase II subfamily.

It localises to the cytoplasm. The enzyme catalyses Exonucleolytic cleavage in the 3'- to 5'-direction to yield nucleoside 5'-phosphates.. In terms of biological role, involved in mRNA degradation. Hydrolyzes single-stranded polyribonucleotides processively in the 3' to 5' direction. The sequence is that of Exoribonuclease 2 from Proteus mirabilis (strain HI4320).